The chain runs to 490 residues: ATP synthase subunit beta, plastid (490 aa).

170–177 (GGAGVGKT) lines the ATP pocket.

This sequence belongs to the ATPase alpha/beta chains family. As to quaternary structure, F-type ATPases have 2 components, CF(1) - the catalytic core - and CF(0) - the membrane proton channel. CF(1) has five subunits: alpha(3), beta(3), gamma(1), delta(1), epsilon(1). CF(0) has four main subunits: a(1), b(1), b'(1) and c(9-12).

Its subcellular location is the plastid membrane. The enzyme catalyses ATP + H2O + 4 H(+)(in) = ADP + phosphate + 5 H(+)(out). Its function is as follows. Produces ATP from ADP in the presence of a proton gradient across the membrane. The catalytic sites are hosted primarily by the beta subunits. The polypeptide is ATP synthase subunit beta, plastid (atpB) (Cuscuta japonica (Japanese dodder)).